Consider the following 341-residue polypeptide: MSTDKTDVKMGVLRIYLDGAYGIGKTTAAEEFLHHFAITPNRILLIGEPLSYWRNLAGEDAICGIYGTQTRRLNGDVSPEDAQRLTAHFQSLFCSPHAIMHAKISALMDTSTSDLVQVNKEPYKIMLSDRHPIASTICFPLSRYLVGDMSPAALPGLLFTLPAEPPGTNLVVCTVSLPSHLSRVSKRARPGETVNLPFVMVLRNVYIMLINTIIFLKTNNWHAGWNTLSFCNDVFKQKLQKSECIKLREVPGIEDTLFAVLKLPELCGEFGNILPLWAWGMETLSNCSRSMSPFVLSLEQTPQHAAQELKTLLPQMTPANMSSGAWNILKELVNAVQDNTS.

19 to 26 (GAYGIGKT) is an ATP binding site. Catalysis depends on E48, which acts as the Proton acceptor. 2 residues coordinate substrate: Y66 and Q90. R183 provides a ligand contact to ATP. R189 contributes to the substrate binding site.

It belongs to the herpesviridae thymidine kinase family. As to quaternary structure, homodimer.

It catalyses the reaction thymidine + ATP = dTMP + ADP + H(+). In terms of biological role, catalyzes the transfer of the gamma-phospho group of ATP to thymidine to generate dTMP in the salvage pathway of pyrimidine synthesis. The dTMP serves as a substrate for DNA polymerase during viral DNA replication. Allows the virus to be reactivated and to grow in non-proliferative cells lacking a high concentration of phosphorylated nucleic acid precursors. This Varicella-zoster virus (strain Dumas) (HHV-3) protein is Thymidine kinase.